We begin with the raw amino-acid sequence, 277 residues long: 3-methyl-2-oxobutanoate hydroxymethyltransferase (277 aa).

Mg(2+)-binding residues include D43 and D82. Residues D43–S44, D82, and K112 each bind 3-methyl-2-oxobutanoate. Position 114 (E114) interacts with Mg(2+). Residue E181 is the Proton acceptor of the active site.

Belongs to the PanB family. In terms of assembly, homodecamer; pentamer of dimers. The cofactor is Mg(2+).

The protein resides in the cytoplasm. It carries out the reaction 3-methyl-2-oxobutanoate + (6R)-5,10-methylene-5,6,7,8-tetrahydrofolate + H2O = 2-dehydropantoate + (6S)-5,6,7,8-tetrahydrofolate. Its pathway is cofactor biosynthesis; (R)-pantothenate biosynthesis; (R)-pantoate from 3-methyl-2-oxobutanoate: step 1/2. In terms of biological role, catalyzes the reversible reaction in which hydroxymethyl group from 5,10-methylenetetrahydrofolate is transferred onto alpha-ketoisovalerate to form ketopantoate. The chain is 3-methyl-2-oxobutanoate hydroxymethyltransferase from Bacillus velezensis (strain DSM 23117 / BGSC 10A6 / LMG 26770 / FZB42) (Bacillus amyloliquefaciens subsp. plantarum).